The sequence spans 535 residues: Glucans biosynthesis protein D 1 (535 aa).

A signal peptide (tat-type signal) is located at residues 1-28 (MHRRDLLKQLAAGFLALAPGLTPSTASA). The insert stretch occupies residues 275–287 (RTDRAGDRQSAAR).

This sequence belongs to the OpgD/OpgG family. In terms of processing, predicted to be exported by the Tat system. The position of the signal peptide cleavage has not been experimentally proven.

Its subcellular location is the periplasm. The protein operates within glycan metabolism; osmoregulated periplasmic glucan (OPG) biosynthesis. Probably involved in the control of the structural glucose backbone of osmoregulated periplasmic glucans (OPGs). The sequence is that of Glucans biosynthesis protein D 1 (opgD1) from Ralstonia nicotianae (strain ATCC BAA-1114 / GMI1000) (Ralstonia solanacearum).